Reading from the N-terminus, the 408-residue chain is Centromere protein U (408 aa).

The span at 1–33 shows a compositional bias: basic residues; sequence DRPRPARLSHARFSKNHSGRTHSMKDKAGRKHR. Residues 1 to 218 are disordered; it reads DRPRPARLSH…GKRKKPRSYT (218 aa). Thr72 bears the Phosphothreonine; by PLK1 mark. Residue Thr92 is modified to Phosphothreonine. A compositionally biased stretch (basic and acidic residues) spans 94-103; it reads QEKEAKRSSD. Ser102 is modified (phosphoserine). Thr104 bears the Phosphothreonine mark. 3 positions are modified to phosphoserine: Ser105, Ser110, and Ser114. The segment covering 118–127 has biased composition (basic residues); the sequence is SAKKPRRKLK. Phosphoserine occurs at positions 130, 133, and 135. Over residues 176–186 the composition is skewed to polar residues; the sequence is PQKTGPQSAES. Residue Lys178 forms a Glycyl lysine isopeptide (Lys-Gly) (interchain with G-Cter in SUMO2) linkage. Phosphoserine is present on residues Ser183 and Ser187. The residue at position 192 (Thr192) is a Phosphothreonine. The residue at position 222 (Ser222) is a Phosphoserine. The stretch at 273-350 forms a coiled coil; it reads SNLKEELIKM…LRKAAYFLSN (78 aa). The Nuclear localization signal signature appears at 293 to 310; that stretch reads KRKNAKIISNIEKKRQRL.

This sequence belongs to the CENP-U/AME1 family. Component of the CENPA-NAC complex, at least composed of CENPA, CENPC, CENPH, CENPM, CENPN, CENPT and CENPU. The CENPA-NAC complex interacts with the CENPA-CAD complex, composed of CENPI, CENPK, CENPL, CENPO, CENPP, CENPQ, CENPR and CENPS. Interacts with MLF1. Post-translationally, phosphorylated by PLK1 at Thr-72, creating a self-tethering site that specifically interacts with the polo-box domain of PLK1.

It is found in the cytoplasm. The protein resides in the nucleus. The protein localises to the chromosome. It localises to the centromere. Its subcellular location is the kinetochore. Its function is as follows. Component of the CENPA-NAC (nucleosome-associated) complex, a complex that plays a central role in assembly of kinetochore proteins, mitotic progression and chromosome segregation. The CENPA-NAC complex recruits the CENPA-CAD (nucleosome distal) complex and may be involved in incorporation of newly synthesized CENPA into centromeres. Plays an important role in the correct PLK1 localization to the mitotic kinetochores. A scaffold protein responsible for the initial recruitment and maintenance of the kinetochore PLK1 population until its degradation. Involved in transcriptional repression. In Bos taurus (Bovine), this protein is Centromere protein U (CENPU).